The chain runs to 265 residues: Leucine-rich repeat-containing protein Bf66946 (265 aa).

Residues 1–20 (MALRDIFLLSMAMTAVTVQA) form the signal peptide. Disulfide bonds link Cys-21–Cys-27 and Cys-25–Cys-39. The LRRNT domain occupies 21-50 (CPSACKCTVSLYGEMVVACGGMGLTEIPED). LRR repeat units lie at residues 51-75 (IPHR…SFKG), 76-99 (LRNL…ALRH), and 100-123 (LGHL…LFDF). An N-linked (GlcNAc...) asparagine glycan is attached at Asn-64. Positions 142–193 (NPWGCDCRMAWLAQELAGGSKTFGDRHMECATPAALAGRGLSEIPQTSFVCT) constitute an LRRCT domain. Cystine bridges form between Cys-146-Cys-171 and Cys-148-Cys-192. Residues 220–240 (VAVVFGCITGLVTILLLVLTA) traverse the membrane as a helical segment.

The protein resides in the cell membrane. Functionally, binds selectively to the Gram-positive bacteria S.aureus and S.pneumoniae. Does not adhere to the Gram-negative bacteria E.coli and S.enterica. Probably recognizes peptidoglycans expressed on the bacterial cell surface. In Branchiostoma floridae (Florida lancelet), this protein is Leucine-rich repeat-containing protein Bf66946.